The sequence spans 187 residues: Large ribosomal subunit protein uL6 (187 aa).

Belongs to the universal ribosomal protein uL6 family. In terms of assembly, part of the 50S ribosomal subunit.

Its function is as follows. This protein binds to the 23S rRNA, and is important in its secondary structure. It is located near the subunit interface in the base of the L7/L12 stalk, and near the tRNA binding site of the peptidyltransferase center. This is Large ribosomal subunit protein uL6 from Thermosynechococcus vestitus (strain NIES-2133 / IAM M-273 / BP-1).